Reading from the N-terminus, the 323-residue chain is Protein REDOX 2 (323 aa).

D53 contacts NADP(+). Catalysis depends on Y58, which acts as the Proton donor. H121 contributes to the substrate binding site. Residues S167–N168, Q189, W215–S220, and D289–R297 each bind NADP(+). The disordered stretch occupies residues G302–L323.

This sequence belongs to the aldo/keto reductase family. Monomer. As to expression, expressed in leaf epidermis.

It catalyses the reaction 15alpha-stemmadenine + NADP(+) = 17-dehydrostemmadenine + NADPH + 2 H(+). Its pathway is alkaloid biosynthesis. Its function is as follows. Component of iboga and aspidosperma monoterpenoid indole alkaloids (MIAs, e.g. tabersonine and catharanthine) biosynthesis pathway from 19E-geissoschizine. Catalyzes the second oxidation step of the unstable intermediate product resulting from the reaction triggered by the geissoschizine oxidase (GO) in the stemmadenine biosynthesis process from 19E-geissoschizine. This chain is Protein REDOX 2, found in Catharanthus roseus (Madagascar periwinkle).